Consider the following 399-residue polypeptide: Lovastatin esterase (399 aa).

Ser-57 (nucleophile) is an active-site residue. Active-site proton acceptor residues include Lys-60 and Tyr-170.

Belongs to the class-A beta-lactamase family.

The catalysed reaction is lovastatin + H2O = monacolin J + (S)-2-methylbutanoate + H(+). It catalyses the reaction pravastatin lactone + H2O = pravastatin diol lactone + (S)-2-methylbutanoate + H(+). It carries out the reaction mevastatin + H2O = compactin diol lactone + (S)-2-methylbutanoate + H(+). Its function is as follows. Esterase that can hydrolyze the side chain of lovastatin to produce monacolin J. Is also able to hydrolyze the side chains of mevastatin and pravastatin, but not simvastatin. The sequence is that of Lovastatin esterase from Penicillium rubens (strain ATCC 28089 / DSM 1075 / NRRL 1951 / Wisconsin 54-1255) (Penicillium chrysogenum).